A 40-amino-acid polypeptide reads, in one-letter code: Omega-conotoxin RsXXVIA (40 aa).

In terms of processing, contains 4 disulfide bonds. Expressed by the venom duct.

It localises to the secreted. Omega-conotoxins act at presynaptic membranes, they bind and block voltage-gated calcium channels (Cav). This toxin inhibits rat Cav2.2/CACNA1B calcium channels in a dose-dependent manner (EC(50)=2.8 uM), whose effect is partially reversed after washing. In vivo, when injected into mice, it shows both an analgesic effect in acute thermal pain at 30 and 45 minutes post-injection and an anti-nociceptive effect in a formalin chronic pain test. The protein is Omega-conotoxin RsXXVIA of Conus regularis (Regular cone).